A 484-amino-acid chain; its full sequence is ATP synthase subunit beta, chloroplastic (484 aa).

Position 163 to 170 (163 to 170 (GGAGVGKT)) interacts with ATP.

Belongs to the ATPase alpha/beta chains family. As to quaternary structure, F-type ATPases have 2 components, CF(1) - the catalytic core - and CF(0) - the membrane proton channel. CF(1) has five subunits: alpha(3), beta(3), gamma(1), delta(1), epsilon(1). CF(0) has four main subunits: a(1), b(1), b'(1) and c(9-12).

It is found in the plastid. The protein resides in the chloroplast thylakoid membrane. The enzyme catalyses ATP + H2O + 4 H(+)(in) = ADP + phosphate + 5 H(+)(out). Its function is as follows. Produces ATP from ADP in the presence of a proton gradient across the membrane. The catalytic sites are hosted primarily by the beta subunits. The sequence is that of ATP synthase subunit beta, chloroplastic from Stigeoclonium helveticum (Green alga).